We begin with the raw amino-acid sequence, 177 residues long: Large ribosomal subunit protein uL6 (177 aa).

Belongs to the universal ribosomal protein uL6 family. In terms of assembly, part of the 50S ribosomal subunit.

This protein binds to the 23S rRNA, and is important in its secondary structure. It is located near the subunit interface in the base of the L7/L12 stalk, and near the tRNA binding site of the peptidyltransferase center. The chain is Large ribosomal subunit protein uL6 from Polynucleobacter necessarius subsp. necessarius (strain STIR1).